Here is a 439-residue protein sequence, read N- to C-terminus: Exodeoxyribonuclease 7 large subunit (439 aa).

This sequence belongs to the XseA family. In terms of assembly, heterooligomer composed of large and small subunits.

It is found in the cytoplasm. It catalyses the reaction Exonucleolytic cleavage in either 5'- to 3'- or 3'- to 5'-direction to yield nucleoside 5'-phosphates.. Functionally, bidirectionally degrades single-stranded DNA into large acid-insoluble oligonucleotides, which are then degraded further into small acid-soluble oligonucleotides. This Haemophilus influenzae (strain 86-028NP) protein is Exodeoxyribonuclease 7 large subunit.